Consider the following 320-residue polypeptide: Phospho-N-acetylmuramoyl-pentapeptide-transferase (320 aa).

10 helical membrane-spanning segments follow: residues 7–27, 50–70, 77–97, 113–133, 148–168, 173–193, 198–216, 221–241, 247–267, and 297–317; these read ILAI…VIPF, GTPT…SLIF, IGAP…DDFI, LVLQ…HLGS, WAYV…VNLT, GLAS…SIFS, MAIF…LRYN, VVFM…AIAV, VLVL…MLQV, and VVVV…AMIQ.

Belongs to the glycosyltransferase 4 family. MraY subfamily. Mg(2+) serves as cofactor.

Its subcellular location is the cell membrane. It catalyses the reaction UDP-N-acetyl-alpha-D-muramoyl-L-alanyl-gamma-D-glutamyl-meso-2,6-diaminopimeloyl-D-alanyl-D-alanine + di-trans,octa-cis-undecaprenyl phosphate = di-trans,octa-cis-undecaprenyl diphospho-N-acetyl-alpha-D-muramoyl-L-alanyl-D-glutamyl-meso-2,6-diaminopimeloyl-D-alanyl-D-alanine + UMP. The protein operates within cell wall biogenesis; peptidoglycan biosynthesis. Its function is as follows. Catalyzes the initial step of the lipid cycle reactions in the biosynthesis of the cell wall peptidoglycan: transfers peptidoglycan precursor phospho-MurNAc-pentapeptide from UDP-MurNAc-pentapeptide onto the lipid carrier undecaprenyl phosphate, yielding undecaprenyl-pyrophosphoryl-MurNAc-pentapeptide, known as lipid I. This chain is Phospho-N-acetylmuramoyl-pentapeptide-transferase, found in Caldicellulosiruptor bescii (strain ATCC BAA-1888 / DSM 6725 / KCTC 15123 / Z-1320) (Anaerocellum thermophilum).